Here is a 415-residue protein sequence, read N- to C-terminus: Squalene synthase 2 (415 aa).

Transmembrane regions (helical) follow at residues 281–301 and 392–412; these read AIFRFCAIPQIMSIGTLALCY and LIVILFIILAILYAYLSSNLP.

The protein belongs to the phytoene/squalene synthase family. Mg(2+) is required as a cofactor. Mn(2+) serves as cofactor.

It localises to the endoplasmic reticulum membrane. The catalysed reaction is 2 (2E,6E)-farnesyl diphosphate + NADH + H(+) = squalene + 2 diphosphate + NAD(+). It carries out the reaction 2 (2E,6E)-farnesyl diphosphate + NADPH + H(+) = squalene + 2 diphosphate + NADP(+). It functions in the pathway terpene metabolism; lanosterol biosynthesis; lanosterol from farnesyl diphosphate: step 1/3. Its function is as follows. Component of the triterpene saponins (e.g. ginsenosides or panaxosides) and phytosterols biosynthetic pathways. Catalyzes the biosynthesis of squalene. The chain is Squalene synthase 2 from Panax ginseng (Korean ginseng).